A 337-amino-acid chain; its full sequence is Methionine import ATP-binding protein MetN (337 aa).

Residues 4–240 (IKNLEITYPG…PWHPITKEFV (237 aa)) enclose the ABC transporter domain. Residue 37-44 (GLSGAGKS) participates in ATP binding.

It belongs to the ABC transporter superfamily. Methionine importer (TC 3.A.1.24) family. As to quaternary structure, the complex is composed of two ATP-binding proteins (MetN), two transmembrane proteins (MetI) and a solute-binding protein (MetQ).

It is found in the cell membrane. It catalyses the reaction L-methionine(out) + ATP + H2O = L-methionine(in) + ADP + phosphate + H(+). The catalysed reaction is D-methionine(out) + ATP + H2O = D-methionine(in) + ADP + phosphate + H(+). Functionally, part of the ABC transporter complex MetNIQ involved in methionine import. Responsible for energy coupling to the transport system. The polypeptide is Methionine import ATP-binding protein MetN (Carboxydothermus hydrogenoformans (strain ATCC BAA-161 / DSM 6008 / Z-2901)).